We begin with the raw amino-acid sequence, 219 residues long: Cytochrome c oxidase assembly protein CtaG (219 aa).

The span at 1-13 (MDATDQGKSTSTT) shows a compositional bias: polar residues. Positions 1 to 24 (MDATDQGKSTSTTAAQAAPGKAAP) are disordered. Residues 1 to 29 (MDATDQGKSTSTTAAQAAPGKAAPRRGIG) lie on the Cytoplasmic side of the membrane. Positions 14-24 (AAQAAPGKAAP) are enriched in low complexity. A helical; Signal-anchor for type II membrane protein transmembrane segment spans residues 30-52 (RDALVGGICGAVVVLMIGASYAA). Topologically, residues 53 to 219 (VPFYNWFCRA…GEPDKPRGSL (167 aa)) are periplasmic.

The protein belongs to the COX11/CtaG family.

Its subcellular location is the cell inner membrane. Its function is as follows. Exerts its effect at some terminal stage of cytochrome c oxidase synthesis, probably by being involved in the insertion of the copper B into subunit I. In Bradyrhizobium sp. (strain ORS 278), this protein is Cytochrome c oxidase assembly protein CtaG.